We begin with the raw amino-acid sequence, 485 residues long: Glutamyl-tRNA(Gln) amidotransferase subunit A (485 aa).

Active-site charge relay system residues include K79 and S154. The Acyl-ester intermediate role is filled by S178.

Belongs to the amidase family. GatA subfamily. Heterotrimer of A, B and C subunits.

The enzyme catalyses L-glutamyl-tRNA(Gln) + L-glutamine + ATP + H2O = L-glutaminyl-tRNA(Gln) + L-glutamate + ADP + phosphate + H(+). Its function is as follows. Allows the formation of correctly charged Gln-tRNA(Gln) through the transamidation of misacylated Glu-tRNA(Gln) in organisms which lack glutaminyl-tRNA synthetase. The reaction takes place in the presence of glutamine and ATP through an activated gamma-phospho-Glu-tRNA(Gln). In Bacillus pumilus (strain SAFR-032), this protein is Glutamyl-tRNA(Gln) amidotransferase subunit A.